We begin with the raw amino-acid sequence, 677 residues long: Galactocerebrosidase (677 aa).

The N-terminal stretch at 1-33 (MGTVPAGSRRAPGCGEGMFILCLALLLAPGAPA) is a signal peptide. Substrate contacts are provided by Thr101, Trp143, and Asn189. Glu190 functions as the Proton donor/acceptor in the catalytic mechanism. Catalysis depends on Glu265, which acts as the Nucleophile. The cysteines at positions 278 and 385 are disulfide-linked. Residues Asn291, Asn370, and Asn381 are each glycosylated (N-linked (GlcNAc...) asparagine). Residue Arg387 participates in substrate binding. N-linked (GlcNAc...) asparagine glycosylation is found at Asn394, Asn399, Asn424, Asn441, Asn509, Asn549, and Asn630.

The protein belongs to the glycosyl hydrolase 59 family.

It localises to the lysosome. The enzyme catalyses a beta-D-galactosyl-(1&lt;-&gt;1')-N-acylsphing-4-enine + H2O = an N-acylsphing-4-enine + D-galactose. The catalysed reaction is beta-D-galactosyl-(1&lt;-&gt;1)-sphing-4-enine + H2O = sphing-4-enine + D-galactose. It carries out the reaction a D-galactosylceramide + H2O = an N-acyl-sphingoid base + D-galactose. In terms of biological role, hydrolyzes the galactose ester bonds of glycolipids such as galactosylceramide and galactosylsphingosine. In Xenopus laevis (African clawed frog), this protein is Galactocerebrosidase.